A 1132-amino-acid polypeptide reads, in one-letter code: Phosphatidylinositide phosphatase SAC2 (1132 aa).

Residues Leu-167–Gly-518 enclose the SAC domain. The hSac2 domain maps to Arg-593 to Ile-760. Ser-827 and Ser-830 each carry phosphoserine. The segment at Glu-846–Leu-875 is disordered. Basic and acidic residues predominate over residues Asp-856–Gln-874. 4 positions are modified to phosphoserine: Ser-878, Ser-881, Ser-907, and Ser-910. Disordered regions lie at residues Val-923–Ser-942 and Leu-974–Ser-1017. At Ser-1103 the chain carries Phosphoserine.

In terms of assembly, homodimer. Interacts with OCRL and RAB5A. Interacts with INPP5B and INPP4A. Interacts with STAT3; the interaction is independent of STAT3 'Tyr-705' phosphorylation status. As to expression, ubiquitous. Highly expressed in brain.

It is found in the membrane. The protein resides in the clathrin-coated pit. The protein localises to the early endosome. It localises to the recycling endosome. It carries out the reaction a myo-inositol phosphate + H2O = myo-inositol + phosphate. Inositol 4-phosphatase which mainly acts on phosphatidylinositol 4-phosphate. May be functionally linked to OCRL, which converts phosphatidylinositol 4,5-bisphosphate to phosphatidylinositol, for a sequential dephosphorylation of phosphatidylinositol 4,5-bisphosphate at the 5 and 4 position of inositol, thus playing an important role in the endocytic recycling. Regulator of TF:TFRC and integrins recycling pathway, is also involved in cell migration mechanisms. Modulates AKT/GSK3B pathway by decreasing AKT and GSK3B phosphorylation. Negatively regulates STAT3 signaling pathway through inhibition of STAT3 phosphorylation and translocation to the nucleus. Functionally important modulator of cardiac myocyte size and of the cardiac response to stress. May play a role as negative regulator of axon regeneration after central nervous system injuries. This is Phosphatidylinositide phosphatase SAC2 from Homo sapiens (Human).